A 129-amino-acid polypeptide reads, in one-letter code: Small ribosomal subunit protein uS9 (129 aa).

Belongs to the universal ribosomal protein uS9 family.

This chain is Small ribosomal subunit protein uS9, found in Chlorobium limicola (strain DSM 245 / NBRC 103803 / 6330).